The chain runs to 657 residues: Serine/threonine kinase NLK (657 aa).

The Protein kinase domain occupies Ser208–Leu554. Residues Ile214 to Val222 and Lys237 each bind ATP. Asp391 acts as the Proton acceptor in catalysis.

The protein belongs to the protein kinase superfamily. Ser/Thr protein kinase family. As to quaternary structure, component of the beta-catenin-lit-1 complex (also called the lit-1/wrm-1 complex or the wrm-1/lit-1 kinase complex) at least composed of lit-1 and wrm-1. Interacts with wrm-1 (via N-terminus); the interaction is direct and activates lit-1 kinase activity which leads to the phosphorylation of pop-1. This promotes pop-1 interaction with par-5 and translocation of pop-1 from the nucleus to the cytoplasm. Interacts with pop-1 (when phosphorylated on 'Ser-125'); the interaction is dependent on the beta-catenin-lit-1 complex. Mg(2+) is required as a cofactor.

The protein localises to the cytoplasm. Its subcellular location is the cell cortex. The protein resides in the nucleus. The catalysed reaction is L-seryl-[protein] + ATP = O-phospho-L-seryl-[protein] + ADP + H(+). It catalyses the reaction L-threonyl-[protein] + ATP = O-phospho-L-threonyl-[protein] + ADP + H(+). Functionally, has a role in the Wnt signaling pathway controlling the asymmetry of cell divisions during embryogenesis. Operates in the AB and EMS cell lineages influencing cell specification. Required for body wall muscle development, endoderm development, pop-1 asymmetry and T-cell division asymmetry. Component of the beta-catenin-lit-1 complex which promotes the phosphorylation, down-regulation and subcellular relocation of pop-1. Regulates plp-1 nuclear localization in embryos. Plays a role in male tail tip morphogenesis. This chain is Serine/threonine kinase NLK, found in Caenorhabditis briggsae.